The chain runs to 349 residues: Cobalt-precorrin-5B C(1)-methyltransferase (349 aa).

Belongs to the CbiD family.

The catalysed reaction is Co-precorrin-5B + S-adenosyl-L-methionine = Co-precorrin-6A + S-adenosyl-L-homocysteine. It participates in cofactor biosynthesis; adenosylcobalamin biosynthesis; cob(II)yrinate a,c-diamide from sirohydrochlorin (anaerobic route): step 6/10. In terms of biological role, catalyzes the methylation of C-1 in cobalt-precorrin-5B to form cobalt-precorrin-6A. The protein is Cobalt-precorrin-5B C(1)-methyltransferase of Saccharolobus solfataricus (strain ATCC 35092 / DSM 1617 / JCM 11322 / P2) (Sulfolobus solfataricus).